The sequence spans 290 residues: 4-hydroxybenzoate octaprenyltransferase (290 aa).

8 helical membrane passes run 23 to 43 (IGTL…GKGV), 46 to 66 (LSIL…GCVV), 99 to 119 (LFVV…AMTI), 141 to 161 (LPQF…YAAV), 170 to 190 (WLLL…YAMV), 213 to 233 (LIVG…GYLT), 234 to 254 (QMSG…IHQQ), and 268 to 288 (AFMD…LSYW).

The protein belongs to the UbiA prenyltransferase family. The cofactor is Mg(2+).

Its subcellular location is the cell inner membrane. The enzyme catalyses all-trans-octaprenyl diphosphate + 4-hydroxybenzoate = 4-hydroxy-3-(all-trans-octaprenyl)benzoate + diphosphate. Its pathway is cofactor biosynthesis; ubiquinone biosynthesis. In terms of biological role, catalyzes the prenylation of para-hydroxybenzoate (PHB) with an all-trans polyprenyl group. Mediates the second step in the final reaction sequence of ubiquinone-8 (UQ-8) biosynthesis, which is the condensation of the polyisoprenoid side chain with PHB, generating the first membrane-bound Q intermediate 3-octaprenyl-4-hydroxybenzoate. The chain is 4-hydroxybenzoate octaprenyltransferase from Serratia proteamaculans (strain 568).